The sequence spans 195 residues: Coagulogen (195 aa).

The first 20 residues, 1-20 (MEKKLLGIAILFVTVVSVLA), serve as a signal peptide directing secretion. Cystine bridges form between Cys-28–Cys-188, Cys-30–Cys-115, Cys-80–Cys-182, Cys-85–Cys-141, Cys-95–Cys-189, Cys-108–Cys-161, Cys-147–Cys-191, and Cys-155–Cys-193.

This sequence belongs to the coagulin family. As to quaternary structure, coagulogen is cleaved after Arg-38 and Arg-66 by a clotting enzyme contained in the hemocyte and activated by a bacterial endotoxin (lipopolysaccharide). This cleavage releases the peptide C and leaves 2 chains of coagulin, A and B, linked by two disulfide bonds. Coagulin molecules interlink to form a gel. Hemolymph.

Its subcellular location is the secreted. In terms of biological role, coagulogen is a gel-forming protein of hemolymph; it hinders the spread of invaders by immobilizing them. This is Coagulogen from Limulus polyphemus (Atlantic horseshoe crab).